The sequence spans 531 residues: Bifunctional aspartate aminotransferase and L-aspartate beta-decarboxylase (531 aa).

L-aspartate contacts are provided by Gly114 and Asn255. The residue at position 314 (Lys314) is an N6-(pyridoxal phosphate)lysine. Residue Arg496 coordinates L-aspartate.

Belongs to the class-I pyridoxal-phosphate-dependent aminotransferase family. In terms of assembly, homododecamer. Requires pyridoxal 5'-phosphate as cofactor.

It carries out the reaction L-aspartate + H(+) = L-alanine + CO2. It catalyses the reaction L-aspartate + 2-oxoglutarate = oxaloacetate + L-glutamate. Inhibited by 10 mM Co(2+), Mn(2+) and Ni(2+), and by 1 mM Cu(2+) and Hg(2+). Bifunctional enzyme that has both L-aspartate decarboxylase and transaminase activity. Has high activity with L-aspartate, and much lower activity with D-aspartate, L-lysine and L-glutamine. This chain is Bifunctional aspartate aminotransferase and L-aspartate beta-decarboxylase, found in Pseudomonas sp.